The primary structure comprises 863 residues: Glycerol-3-phosphate acyltransferase (863 aa).

The tract at residues 1–29 is disordered; sequence MPKKNSPLLPKETTTTQSSVDTSGSSNLT. Positions 12–29 are enriched in polar residues; that stretch reads ETTTTQSSVDTSGSSNLT. Residues 343–348 carry the HXXXXD motif motif; that stretch reads SHRSHI.

This sequence belongs to the GPAT/DAPAT family.

It localises to the cell inner membrane. It carries out the reaction sn-glycerol 3-phosphate + an acyl-CoA = a 1-acyl-sn-glycero-3-phosphate + CoA. It functions in the pathway phospholipid metabolism; CDP-diacylglycerol biosynthesis; CDP-diacylglycerol from sn-glycerol 3-phosphate: step 1/3. This is Glycerol-3-phosphate acyltransferase from Xylella fastidiosa (strain M12).